We begin with the raw amino-acid sequence, 527 residues long: MALSTATKAATDALAANRAPTSVNAQEVHRWLQSFNWDFKNNRTKYATKYKMANETKEQFKLIAKEYARMEAVKDERQFGSLQDALTRLNAGVRVHPKWNETMKVVSNFLEVGEYNAIAATGMLWDSAQAAEQKNGYLAQVLDEIRHTHQCAYVNYYFAKNGQDPAGHNDARRTRTIGPLWKGMKRVFSDGFISGDAVECSLNLQLVGEACFTNPLIVAVTEWAAANGDEITPTVFLSIETDELRHMANGYQTVVSIANDPASAKYLNTDLNNAFWTQQKYFTPVLGMLFEYGSKFKVEPWVKTWNRWVYEDWGGIWIGRLGKYGVESPRSLKDAKQDAYWAHHDLYLLAYALWPTGFFRLALPDQEEMEWFEANYPGWYDHYGKIYEEWRARGCEDPSSGFIPLMWFIENNHPIYIDRVSQVPFCPSLAKGASTLRVHEYNGQMHTFSDQWGERMWLAEPERYECQNIFEQYEGRELSEVIAELHGLRSDGKTLIAQPHVRGDKLWTLDDIKRLNCVFKNPVKAFN.

The Fe cation site is built by Glu-114, Glu-144, and His-147. Cys-151 is an active-site residue. Fe cation contacts are provided by Glu-209, Glu-243, and His-246.

It belongs to the TmoA/XamoA family. M.capsulatus has two forms of methane monooxygenase, a soluble and a membrane-bound type. The soluble type consists of four components (A to D): protein A, comprising three chains, in an alpha-2, beta-2, gamma-2 configuration, is a nonheme iron protein containing an unusual mu-hydroxo bridge structure at its active site and interacts with both oxygen and methane. The cofactor is Fe cation.

The catalysed reaction is methane + NADH + O2 + H(+) = methanol + NAD(+) + H2O. The enzyme catalyses methane + NADPH + O2 + H(+) = methanol + NADP(+) + H2O. Functionally, responsible for the initial oxygenation of methane to methanol in methanotrophs. It also catalyzes the monohydroxylation of a variety of unactivated alkenes, alicyclic, aromatic and heterocyclic compounds. The polypeptide is Methane monooxygenase component A alpha chain (mmoX) (Methylococcus capsulatus (strain ATCC 33009 / NCIMB 11132 / Bath)).